Consider the following 397-residue polypeptide: Probable transport protein MmpL6 (397 aa).

Helical transmembrane passes span 190 to 210 (YDLLIAGIAALSLILLIMMII), 214 to 234 (LVAALVIVGTVALSLGASFGL), 242 to 262 (LLGIQLYWIVLALAVILLLAV), 293 to 313 (TGGVVTAAGLVFAATMSSFVF), and 328 to 348 (LGLLFDTLVVRAFMTPSIAVL).

The protein belongs to the resistance-nodulation-cell division (RND) (TC 2.A.6) family. MmpL subfamily.

The protein resides in the cell membrane. The polypeptide is Probable transport protein MmpL6 (mmpL6) (Mycobacterium tuberculosis (strain CDC 1551 / Oshkosh)).